We begin with the raw amino-acid sequence, 361 residues long: Phospho-N-acetylmuramoyl-pentapeptide-transferase (361 aa).

10 helical membrane passes run 28–48, 70–90, 94–114, 129–149, 169–189, 205–225, 237–257, 264–284, 289–309, and 338–358; these read LSMF…IKFF, IGTP…GILL, LSNY…LLGA, VSFK…IYGL, LIIN…VGSS, PVIL…NIVF, MGEV…FLWF, IFMG…IGII, IVLA…IIQV, and TVVI…LATL.

The protein belongs to the glycosyltransferase 4 family. MraY subfamily. It depends on Mg(2+) as a cofactor.

The protein resides in the cell inner membrane. It carries out the reaction UDP-N-acetyl-alpha-D-muramoyl-L-alanyl-gamma-D-glutamyl-meso-2,6-diaminopimeloyl-D-alanyl-D-alanine + di-trans,octa-cis-undecaprenyl phosphate = di-trans,octa-cis-undecaprenyl diphospho-N-acetyl-alpha-D-muramoyl-L-alanyl-D-glutamyl-meso-2,6-diaminopimeloyl-D-alanyl-D-alanine + UMP. It functions in the pathway cell wall biogenesis; peptidoglycan biosynthesis. Functionally, catalyzes the initial step of the lipid cycle reactions in the biosynthesis of the cell wall peptidoglycan: transfers peptidoglycan precursor phospho-MurNAc-pentapeptide from UDP-MurNAc-pentapeptide onto the lipid carrier undecaprenyl phosphate, yielding undecaprenyl-pyrophosphoryl-MurNAc-pentapeptide, known as lipid I. The chain is Phospho-N-acetylmuramoyl-pentapeptide-transferase from Pelagibacter ubique (strain HTCC1062).